Here is a 463-residue protein sequence, read N- to C-terminus: Asparagine--tRNA ligase (463 aa).

Belongs to the class-II aminoacyl-tRNA synthetase family. As to quaternary structure, homodimer.

Its subcellular location is the cytoplasm. It catalyses the reaction tRNA(Asn) + L-asparagine + ATP = L-asparaginyl-tRNA(Asn) + AMP + diphosphate + H(+). The polypeptide is Asparagine--tRNA ligase (Bacillus cereus (strain ZK / E33L)).